The following is a 1228-amino-acid chain: Multimerin-1 (1228 aa).

An N-terminal signal peptide occupies residues 1–19 (MKGARLFVLLSSLWSGGIG). Residue N21 is glycosylated (N-linked (GlcNAc...) asparagine). The interval 68 to 98 (TPEARTSEDSLLKSTLPPSETSAPAEGVRNQ) is disordered. The span at 79-89 (LKSTLPPSETS) shows a compositional bias: polar residues. Residues N97, N114, and N120 are each glycosylated (N-linked (GlcNAc...) asparagine). The N-linked (GlcNAc...) (complex) asparagine glycan is linked to N136. The disordered stretch occupies residues 157–200 (NTVGGTGGIGGVGGTGGVGNRAPRETYLSRGDSSSSQRTDYQKS). Positions 160 to 175 (GGTGGIGGVGGTGGVG) are enriched in gly residues. The short motif at 186–188 (RGD) is the Cell attachment site element. Over residues 187–200 (GDSSSSQRTDYQKS) the composition is skewed to polar residues. In terms of domain architecture, EMI spans 207–282 (GKNWCAYVHT…PGYSGPKCQL (76 aa)). 3 disulfide bridges follow: C211–C272, C238–C245, and C271–C280. Residue T216 is glycosylated (O-linked (Fuc) threonine). The O-linked (Fuc) threonine glycan is linked to T265. 2 coiled-coil regions span residues 333–365 (MKLT…KVSE) and 400–430 (NDMQ…IQKV). N-linked (GlcNAc...) asparagine glycosylation occurs at N344. N431, N507, N541, N576, N618, N680, N729, N783, N816, N828, N840, N921, N933, N942, N981, and N1020 each carry an N-linked (GlcNAc...) asparagine glycan. The stretch at 503 to 523 (YESLNKTLSKLKEVHEQLLST) forms a coiled coil. Coiled coils occupy residues 580–650 (SLEM…EILQ) and 675–726 (RKKI…EMED). Residues 819 to 869 (NFQKMYQMFNETTSQVRKYQQNMSHLEEKLLLTTKISKNFETRLQDIESKV) are a coiled coil. In terms of domain architecture, EGF-like spans 1041–1077 (EYSSCSRHPCQNGGTCINGRTSFTCACRHPFTGDNCT). Intrachain disulfides connect C1045/C1056, C1050/C1065, and C1067/C1076. T1055 carries O-linked (Fuc) threonine glycosylation. N-linked (GlcNAc...) asparagine glycosylation occurs at N1075. The C1q domain maps to 1096-1228 (RYAPMVAFFA…TFSGYLLYRT (133 aa)).

As to quaternary structure, multimeric. Composed of varying sized, disulfide-linked multimers, the smallest of which is a homotrimer. Proteolysis of the promultimerin in the N-terminal region, leads to the mature p155 form that is stored in platelets. Interacts with factor V/Va. In terms of processing, the N-terminus is blocked. Post-translationally, extensively N-glycosylated. O-fucosylated within the EMI domain (at Thr-216 and Thr-265) by FUT10/POFUT3 and FUT11/POFUT4. O-fucosylation at Thr-216 and Thr-1055 are required for facilitating protein folding and secretion. As to expression, synthesized by endothelial cells and megakaryocytes. Stored in platelet alpha granules and endothelial cell Weibel-Palade bodies, following activation of these cells, it is released and attached to megakaryocytes, platelets, endothelium and subendothelium of blood vessels. Not found in plasma. Found in vascular tissues such as placenta, lung, and liver.

The protein resides in the secreted. Carrier protein for platelet (but not plasma) factor V/Va. Plays a role in the storage and stabilization of factor V in platelets. Upon release following platelet activation, may limit platelet and plasma factor Va-dependent thrombin generation. Ligand for integrin alpha-IIb/beta-3 and integrin alpha-V/beta-3 on activated platelets, and may function as an extracellular matrix or adhesive protein. The sequence is that of Multimerin-1 (MMRN1) from Homo sapiens (Human).